Consider the following 679-residue polypeptide: MSEPRQILVTSALPYANGSIHLGHMLEYIQTDMWVRFQKLRGNQCIYVCADDAHGSAIMLRAEKEGITPEQLIANVQAEHSSDFADFLVDFDNFHSTHSEENRELSSLIYSRLREAGHIATRSVTQYFDPEKGMFLADRFIKGTCPKCAAEDQYGDNCEKCGATYAPTELKNPKSAISGATPVLRDSQHFFFKLPDFQAMLQQWTRSGTLQDAVANKLAEWLDSGLQEWDISRDAPYFGFEIPGEPGKYFYVWLDAPIGYMASFKNLCARRPELDFDAFWNEGSKAELYHFIGKDIVNFHALFWPAMLEGAGFRKPTAVNVHGYLTVNGAKMSKSRGTFIKARTYLDHLQPEYLRYYYAAKLGRGVDDLDLNLEDFVQKVNSDLVGKVVNIASRCAGFIHKGNEGVMVGGDAAPELTEAFLAAAPSIAEAYEARDFGRAMREIMALADRANAWIADKAPWSLAKQEGKQDEVQAICAQGINLFRQLVIFLKPVLPVLAADAEAFLNVAPLTWNDHLTRLENHTLNPFKALMSRIEPAKVEAMVAASKEDLLAAEAKAPAGNGELAKDPLSAEIEFDTFAAVDLRVALIVKAEAVAGADKLLQLTLDIGDERRNVFSGIKSAYPDPSKLEGRLTMMVANLKPRKMRFGVSEGMVMAAGPGGEEIYLLSPDSGAKPGQRIK.

Residues 14–24 (PYANGSIHLGH) carry the 'HIGH' region motif. Positions 145, 148, 158, and 161 each coordinate Zn(2+). The 'KMSKS' region motif lies at 331–335 (KMSKS). Lys-334 contributes to the ATP binding site. The 103-residue stretch at 577 to 679 (TFAAVDLRVA…SGAKPGQRIK (103 aa)) folds into the tRNA-binding domain.

It belongs to the class-I aminoacyl-tRNA synthetase family. MetG type 1 subfamily. As to quaternary structure, homodimer. Requires Zn(2+) as cofactor.

Its subcellular location is the cytoplasm. The enzyme catalyses tRNA(Met) + L-methionine + ATP = L-methionyl-tRNA(Met) + AMP + diphosphate. In terms of biological role, is required not only for elongation of protein synthesis but also for the initiation of all mRNA translation through initiator tRNA(fMet) aminoacylation. This is Methionine--tRNA ligase from Pseudomonas putida (strain ATCC 700007 / DSM 6899 / JCM 31910 / BCRC 17059 / LMG 24140 / F1).